A 504-amino-acid chain; its full sequence is Pyruvate kinase (504 aa).

Arg53 contributes to the substrate binding site. Residues Asn55, Ser57, Asp88, and Thr89 each contribute to the K(+) site. 55 to 58 (NFSH) contacts ATP. Positions 95 and 181 each coordinate ATP. Position 246 (Glu246) interacts with Mg(2+). 3 residues coordinate substrate: Gly269, Asp270, and Thr302. Asp270 contacts Mg(2+).

Belongs to the pyruvate kinase family. As to quaternary structure, homotetramer. Mg(2+) is required as a cofactor. K(+) serves as cofactor.

The catalysed reaction is pyruvate + ATP = phosphoenolpyruvate + ADP + H(+). It participates in carbohydrate degradation; glycolysis; pyruvate from D-glyceraldehyde 3-phosphate: step 5/5. This chain is Pyruvate kinase (PYK1), found in Debaryomyces hansenii (strain ATCC 36239 / CBS 767 / BCRC 21394 / JCM 1990 / NBRC 0083 / IGC 2968) (Yeast).